The chain runs to 184 residues: Ribosome-recycling factor (184 aa).

This sequence belongs to the RRF family.

The protein localises to the cytoplasm. Its function is as follows. Responsible for the release of ribosomes from messenger RNA at the termination of protein biosynthesis. May increase the efficiency of translation by recycling ribosomes from one round of translation to another. The chain is Ribosome-recycling factor from Agathobacter rectalis (strain ATCC 33656 / DSM 3377 / JCM 17463 / KCTC 5835 / VPI 0990) (Eubacterium rectale).